Consider the following 505-residue polypeptide: uncharacterized protein (505 aa).

Residues 461 to 480 (RTDVHPGNSDDEGAYSSADS) are disordered.

The protein to M.jannaschii MJ0787.

This is an uncharacterized protein from Methanothermobacter thermautotrophicus (strain ATCC 29096 / DSM 1053 / JCM 10044 / NBRC 100330 / Delta H) (Methanobacterium thermoautotrophicum).